A 46-amino-acid polypeptide reads, in one-letter code: Defensin Tk-AMP-D5 (46 aa).

4 disulfide bridges follow: Cys-3–Cys-46, Cys-14–Cys-34, Cys-20–Cys-40, and Cys-24–Cys-42.

Plant defense peptide. This chain is Defensin Tk-AMP-D5, found in Triticum kiharae (Wheat).